The chain runs to 355 residues: Alanine racemase (355 aa).

Lysine 34 (proton acceptor; specific for D-alanine) is an active-site residue. Residue lysine 34 is modified to N6-(pyridoxal phosphate)lysine. Arginine 133 lines the substrate pocket. The active-site Proton acceptor; specific for L-alanine is tyrosine 249. A substrate-binding site is contributed by methionine 297.

This sequence belongs to the alanine racemase family. It depends on pyridoxal 5'-phosphate as a cofactor.

It catalyses the reaction L-alanine = D-alanine. It participates in amino-acid biosynthesis; D-alanine biosynthesis; D-alanine from L-alanine: step 1/1. In terms of biological role, catalyzes the interconversion of L-alanine and D-alanine. May also act on other amino acids. This chain is Alanine racemase (alr), found in Rickettsia africae (strain ESF-5).